A 542-amino-acid polypeptide reads, in one-letter code: Peptide chain release factor 3 (542 aa).

A tr-type G domain is found at 14-283 (ERRRNFAIIS…AFLDYALKPA (270 aa)). GTP is bound by residues 23–30 (SHPDAGKT), 91–95 (DTPGH), and 145–148 (NKLD).

Belongs to the TRAFAC class translation factor GTPase superfamily. Classic translation factor GTPase family. PrfC subfamily.

It is found in the cytoplasm. Its function is as follows. Increases the formation of ribosomal termination complexes and stimulates activities of RF-1 and RF-2. It binds guanine nucleotides and has strong preference for UGA stop codons. It may interact directly with the ribosome. The stimulation of RF-1 and RF-2 is significantly reduced by GTP and GDP, but not by GMP. The polypeptide is Peptide chain release factor 3 (Cyanothece sp. (strain PCC 7425 / ATCC 29141)).